The primary structure comprises 679 residues: MAALITSTTAATAASGPLVDYLWMLILGFIIAFVLAFSVGANDVANSFGTAVGSGVVTLKQACILASIFETVGSVLLGAKVSETIRKGLIDVEMYNSTQGLLMAGSVSAMFGSAVWQLVASFLKLPISGTHCIVGATIGFSLVAKGQEGVKWSELIKIVMSWFVSPLLSGIMSGILFFLVRAFILHKADPVPNGLRALPVFYACTVGINLFSIMYTGAPLLGFDKLPLWGTILISVGCAVFCALIVWFFVCPRMKRKIEREIKCSPSESPLMEKKNSLKEDHEETKLSVSDIENRNPVSEVGPATVPLQAVVEERTVSFKLGDLEEAPERERLPSVDLKEETSIDSTVNGAVQLPNGNLVQFSQAVSNQINSSGHYQYHTVHKDSGLYKELLHKLHLAKVGDCMGDSGDKPLRRNNSYTSYTMAICGMPLDSFRAKEGEQKGEEVEKLTWPNADSKKRIRMDSYTSYCNAVSDLHSASEIDMSVKAEMGLGDRKGSNGSLEEWYDQDKPEVSLLFQFLQILTACFGSFAHGGNDVSNAIGPLVALYLVYDTGDVSSKVATPIWLLLYGGVGICIGLWVWGRRVIQTMGKDLTPITPSSGFSIELASALTVVIASNIGLPISTTHCKVGSVVSVGWLRSKKAVDWRLFRNIFMAWFVTVPISGVISAAIMAIFRYVILRM.

Transmembrane regions (helical) follow at residues 21–41, 62–82, 100–120, 158–178, 203–223, and 230–250; these read YLWM…SVGA, ACIL…AKVS, GLLM…QLVA, IVMS…ILFF, ACTV…LLGF, and GTIL…WFFV. 2 positions are modified to phosphoserine: Ser-265 and Ser-269. The interval 268–288 is disordered; it reads ESPLMEKKNSLKEDHEETKLS. The span at 271 to 286 shows a compositional bias: basic and acidic residues; that stretch reads LMEKKNSLKEDHEETK. Transmembrane regions (helical) follow at residues 511–531, 558–578, 600–620, and 650–670; these read VSLL…FAHG, VATP…GLWV, FSIE…GLPI, and IFMA…AIMA. Positions 550 to 558 are a; that stretch reads DTGDVSSKV.

It belongs to the inorganic phosphate transporter (PiT) (TC 2.A.20) family.

It localises to the cell membrane. The catalysed reaction is 2 Na(+)(out) + phosphate(out) = 2 Na(+)(in) + phosphate(in). Sodium-phosphate symporter which preferentially transports the monovalent form of phosphate with a stoichiometry of two sodium ions per phosphate ion. May play a role in extracellular matrix and cartilage calcification as well as in vascular calcification. Essential for cell proliferation but this function is independent of its phosphate transporter activity. The protein is Sodium-dependent phosphate transporter 1 (SLC20A1) of Pongo abelii (Sumatran orangutan).